The following is a 296-amino-acid chain: Cytidine deaminase (296 aa).

2 consecutive CMP/dCMP-type deaminase domains span residues 47-167 (TEAE…FGPK) and 186-296 (DSSD…VDPV). 88-90 (NLE) is a substrate binding site. Residue His101 participates in Zn(2+) binding. The Proton donor role is filled by Glu103. Zn(2+) contacts are provided by Cys128 and Cys131.

It belongs to the cytidine and deoxycytidylate deaminase family. As to quaternary structure, homodimer. Zn(2+) serves as cofactor.

It catalyses the reaction cytidine + H2O + H(+) = uridine + NH4(+). The catalysed reaction is 2'-deoxycytidine + H2O + H(+) = 2'-deoxyuridine + NH4(+). In terms of biological role, this enzyme scavenges exogenous and endogenous cytidine and 2'-deoxycytidine for UMP synthesis. The protein is Cytidine deaminase of Shewanella sp. (strain ANA-3).